The sequence spans 505 residues: Maturase K (505 aa).

It belongs to the intron maturase 2 family. MatK subfamily.

It is found in the plastid. Its subcellular location is the chloroplast. Usually encoded in the trnK tRNA gene intron. Probably assists in splicing its own and other chloroplast group II introns. This is Maturase K from Elaeagnus umbellata (Autumn olive).